Here is a 56-residue protein sequence, read N- to C-terminus: UPF0391 membrane protein PSHAa0537 (56 aa).

Helical transmembrane passes span 6–26 and 27–47; these read ITFL…IAGA and AAGI…ISLV.

This sequence belongs to the UPF0391 family.

It localises to the cell membrane. This is UPF0391 membrane protein PSHAa0537 from Pseudoalteromonas translucida (strain TAC 125).